Reading from the N-terminus, the 374-residue chain is Low-specificity L-threonine aldolase (374 aa).

At Lys213 the chain carries N6-(pyridoxal phosphate)lysine. Residues 354 to 374 (HPHKDDGRNNKKMYSLDAIKK) form a disordered region.

This sequence belongs to the threonine aldolase family. Homotetramer. It depends on pyridoxal 5'-phosphate as a cofactor.

It catalyses the reaction L-threonine = acetaldehyde + glycine. The enzyme catalyses L-allo-threonine = acetaldehyde + glycine. The protein operates within amino-acid degradation; L-threonine degradation via aldolase pathway; acetaldehyde and glycine from L-threonine: step 1/1. This Candida albicans (Yeast) protein is Low-specificity L-threonine aldolase (GLY1).